Here is a 268-residue protein sequence, read N- to C-terminus: Tropinone reductase homolog At2g29370 (268 aa).

An NADP(+)-binding site is contributed by 22–46 (LVTGGSKGLGKAVVEELAMLGARVH). Residue Ser-155 coordinates substrate. Tyr-168 serves as the catalytic Proton acceptor.

Belongs to the short-chain dehydrogenases/reductases (SDR) family. SDR65C subfamily.

The protein is Tropinone reductase homolog At2g29370 of Arabidopsis thaliana (Mouse-ear cress).